Reading from the N-terminus, the 849-residue chain is DNA mismatch repair protein MutS (849 aa).

602-609 (GPNMSGKS) is an ATP binding site.

This sequence belongs to the DNA mismatch repair MutS family.

Its function is as follows. This protein is involved in the repair of mismatches in DNA. It is possible that it carries out the mismatch recognition step. This protein has a weak ATPase activity. The polypeptide is DNA mismatch repair protein MutS (Streptococcus mutans serotype c (strain ATCC 700610 / UA159)).